The primary structure comprises 269 residues: MTALPRYSVFGNPVAHSKSPQIHQQFALQEGVDIEYERICADIGGFAQAVSTFFETGGCGANVTVPFKQEAFHLADEHSERALAAGAVNTLIPLKNGKLRGDNTDGIGLTNDITQVKNIAIEGKTILLLGAGGAVRGVIPVLKEHRPARIVIANRTRAKAEELAQLFGIEAVPMADVNGGFDIIINGTSGGLNGQIPDIPPDIFQNCALAYDMVYGCAAKPFLDFARQSGAKKTADGLGMLVGQAAASYALWRGFTPDIRPVIEYMKAM.

Shikimate-binding positions include 17–19 (SKS) and Thr64. The active-site Proton acceptor is the Lys68. Glu80 is an NADP(+) binding site. 2 residues coordinate shikimate: Asn89 and Asp105. Residues 130 to 134 (GAGGA), 154 to 159 (NRTRAK), and Met213 contribute to the NADP(+) site. Tyr215 provides a ligand contact to shikimate. Gly237 contacts NADP(+).

It belongs to the shikimate dehydrogenase family. In terms of assembly, homodimer.

It catalyses the reaction shikimate + NADP(+) = 3-dehydroshikimate + NADPH + H(+). It functions in the pathway metabolic intermediate biosynthesis; chorismate biosynthesis; chorismate from D-erythrose 4-phosphate and phosphoenolpyruvate: step 4/7. Its function is as follows. Involved in the biosynthesis of the chorismate, which leads to the biosynthesis of aromatic amino acids. Catalyzes the reversible NADPH linked reduction of 3-dehydroshikimate (DHSA) to yield shikimate (SA). In Neisseria meningitidis serogroup C / serotype 2a (strain ATCC 700532 / DSM 15464 / FAM18), this protein is Shikimate dehydrogenase (NADP(+)).